The following is a 226-amino-acid chain: Endonuclease V (226 aa).

The Mg(2+) site is built by Asp-43 and Asp-111.

The protein belongs to the endonuclease V family. Mg(2+) serves as cofactor.

It localises to the cytoplasm. The enzyme catalyses Endonucleolytic cleavage at apurinic or apyrimidinic sites to products with a 5'-phosphate.. Its function is as follows. DNA repair enzyme involved in the repair of deaminated bases. Selectively cleaves double-stranded DNA at the second phosphodiester bond 3' to a deoxyinosine leaving behind the intact lesion on the nicked DNA. This Nocardia farcinica (strain IFM 10152) protein is Endonuclease V.